The primary structure comprises 132 residues: Small ribosomal subunit protein uS11 (132 aa).

This sequence belongs to the universal ribosomal protein uS11 family. In terms of assembly, part of the 30S ribosomal subunit. Interacts with proteins S7 and S18. Binds to IF-3.

Its function is as follows. Located on the platform of the 30S subunit, it bridges several disparate RNA helices of the 16S rRNA. Forms part of the Shine-Dalgarno cleft in the 70S ribosome. This is Small ribosomal subunit protein uS11 from Clostridium botulinum (strain 657 / Type Ba4).